The primary structure comprises 378 residues: Cytochrome b (378 aa).

4 consecutive transmembrane segments (helical) span residues 34–54, 78–99, 114–134, and 179–199; these read FGSL…FLAM, WFLR…FMHV, WNTG…GYVL, and FFTF…IHLL. Heme b contacts are provided by His-84 and His-98. Heme b-binding residues include His-183 and His-197. A ubiquinone is bound at residue His-202. 4 helical membrane-spanning segments follow: residues 227–247, 289–309, 321–341, and 348–368; these read YKDI…IWKF, LGGV…PFTH, LNQI…WIGA, and YVLT…INPL.

Belongs to the cytochrome b family. As to quaternary structure, the main subunits of complex b-c1 are: cytochrome b, cytochrome c1 and the Rieske protein. The cofactor is heme b.

The protein resides in the mitochondrion inner membrane. Component of the ubiquinol-cytochrome c reductase complex (complex III or cytochrome b-c1 complex) that is part of the mitochondrial respiratory chain. The b-c1 complex mediates electron transfer from ubiquinol to cytochrome c. Contributes to the generation of a proton gradient across the mitochondrial membrane that is then used for ATP synthesis. This is Cytochrome b (MT-CYB) from Anopheles quadrimaculatus (Common malaria mosquito).